The sequence spans 31 residues: Superoxide dismutase [Cu-Zn] (31 aa).

This sequence belongs to the Cu-Zn superoxide dismutase family. It depends on Cu cation as a cofactor. Requires Zn(2+) as cofactor.

The protein resides in the cytoplasm. It carries out the reaction 2 superoxide + 2 H(+) = H2O2 + O2. In terms of biological role, destroys radicals which are normally produced within the cells and which are toxic to biological systems. The protein is Superoxide dismutase [Cu-Zn] of Striga hermonthica (Purple witchweed).